A 336-amino-acid polypeptide reads, in one-letter code: Ephrin-B2 (336 aa).

The N-terminal stretch at Met1–Ser28 is a signal peptide. Topologically, residues Arg29–Ala232 are extracellular. An Ephrin RBD domain is found at Ile31–Val167. N-linked (GlcNAc...) asparagine glycosylation occurs at Asn39. 2 cysteine pairs are disulfide-bonded: Cys65/Cys104 and Cys92/Cys156. Residue Asn142 is glycosylated (N-linked (GlcNAc...) asparagine). Residues Asp170–Ala216 form a disordered region. Positions Asn193 to Ala216 are enriched in polar residues. The helical transmembrane segment at Gly233 to Leu253 threads the bilayer. At Lys254–Val336 the chain is on the cytoplasmic side. Position 263 is a phosphoserine (Ser263). Position 277 is a phosphothreonine (Thr277). Residue Arg280 is modified to Omega-N-methylarginine. Residues Tyr334–Val336 carry the PDZ-binding motif.

The protein belongs to the ephrin family. In terms of assembly, interacts with PDZRN3. Binds to the ephrin receptor EPHA3, EPHA4 and EPHB4. In terms of processing, inducible phosphorylation of tyrosine residues in the cytoplasmic domain. As to expression, expressed in inner and outer pillar cells of the organ of Corti (at protein level). Expressed on lateral floor plate cells, specifically on commissural axon segments that have passed through the floor plate. Expressed in cells of the retinal ganglion cell layer during retinal axon guidance to the optic disk. Expressed in myogenic progenitor cells.

Its subcellular location is the cell membrane. The protein resides in the cell junction. It is found in the adherens junction. Its function is as follows. Cell surface transmembrane ligand for Eph receptors, a family of receptor tyrosine kinases which are crucial for migration, repulsion and adhesion during neuronal, vascular and epithelial development. Binds promiscuously Eph receptors residing on adjacent cells, leading to contact-dependent bidirectional signaling into neighboring cells. The signaling pathway downstream of the receptor is referred to as forward signaling while the signaling pathway downstream of the ephrin ligand is referred to as reverse signaling. Binds to receptor tyrosine kinase including EPHA4, EPHA3 and EPHB4. Together with EPHB4 plays a central role in heart morphogenesis and angiogenesis through regulation of cell adhesion and cell migration. EPHB4-mediated forward signaling controls cellular repulsion and segregation from EFNB2-expressing cells. May play a role in constraining the orientation of longitudinally projecting axons. This is Ephrin-B2 (Efnb2) from Mus musculus (Mouse).